Reading from the N-terminus, the 257-residue chain is uncharacterized protein (257 aa).

Positions 1-22 are cleaved as a signal peptide; that stretch reads MGYLKRFALYISVMILMFAIAG. Cys23 carries the N-palmitoyl cysteine lipid modification. The S-diacylglycerol cysteine moiety is linked to residue Cys23.

It belongs to the staphylococcal tandem lipoprotein family.

It localises to the cell membrane. This is an uncharacterized protein from Staphylococcus aureus (strain MRSA252).